A 648-amino-acid chain; its full sequence is Phosphomethylpyrimidine synthase (648 aa).

Residues asparagine 236, methionine 265, tyrosine 294, histidine 330, serine 350 to glycine 352, aspartate 391 to arginine 394, and glutamate 430 each bind substrate. Residue histidine 434 participates in Zn(2+) binding. A substrate-binding site is contributed by tyrosine 457. Histidine 498 contacts Zn(2+). [4Fe-4S] cluster-binding residues include cysteine 578, cysteine 581, and cysteine 586.

This sequence belongs to the ThiC family. As to quaternary structure, homodimer. [4Fe-4S] cluster is required as a cofactor.

It carries out the reaction 5-amino-1-(5-phospho-beta-D-ribosyl)imidazole + S-adenosyl-L-methionine = 4-amino-2-methyl-5-(phosphooxymethyl)pyrimidine + CO + 5'-deoxyadenosine + formate + L-methionine + 3 H(+). It functions in the pathway cofactor biosynthesis; thiamine diphosphate biosynthesis. Its function is as follows. Catalyzes the synthesis of the hydroxymethylpyrimidine phosphate (HMP-P) moiety of thiamine from aminoimidazole ribotide (AIR) in a radical S-adenosyl-L-methionine (SAM)-dependent reaction. The protein is Phosphomethylpyrimidine synthase of Aliivibrio salmonicida (strain LFI1238) (Vibrio salmonicida (strain LFI1238)).